The primary structure comprises 847 residues: Putative disease resistance RPP13-like protein 3 (847 aa).

Residues 24 to 41 are a coiled coil; the sequence is LMGVKDDLEELKTELTCI. In terms of domain architecture, NB-ARC spans 143-453; sequence TNVRVRQLRR…AEGFIQEDEE (311 aa). 192–199 contacts ATP; sequence GMGGLGKT.

The protein belongs to the disease resistance NB-LRR family. RPP13 subfamily.

Functionally, potential disease resistance protein. The protein is Putative disease resistance RPP13-like protein 3 (RPP13L3) of Arabidopsis thaliana (Mouse-ear cress).